The sequence spans 207 residues: Large ribosomal subunit protein uL4 (207 aa).

This sequence belongs to the universal ribosomal protein uL4 family. In terms of assembly, part of the 50S ribosomal subunit.

One of the primary rRNA binding proteins, this protein initially binds near the 5'-end of the 23S rRNA. It is important during the early stages of 50S assembly. It makes multiple contacts with different domains of the 23S rRNA in the assembled 50S subunit and ribosome. In terms of biological role, forms part of the polypeptide exit tunnel. This is Large ribosomal subunit protein uL4 from Rickettsia africae (strain ESF-5).